A 485-amino-acid polypeptide reads, in one-letter code: MELYEQTIHNLQTQLQARQVSSVEITNSFLDRIESTDQSINAFITVTKEQALLDAAAADQRIAAGNCAPLTGIPVALKDIFLTEGVRTTSASKMLDNFIAPYDATAWTRMKSQGAVLLGKLNQDEFAMGSSCENSAFGPTRNPWNKDHIPGGSSGGSAAAIAAQQAVATLGTDTGGSIRQPASHCGCVGLKPTYGRVSRYGVIAYASSLDQVGPMTRDVTDAALLLGVIAGYDPKDSTSVDCPVPDYTAALQQGVKGLTIGLPKEYFIDGLDADVQQAMEQAIAVYRQLGAEFVEVSLPHTNYAVATYYLIATAEASSNLARYEGVRFGHRAKDTAGLIDLMMQSRSEGFGAEVKRRIMLGTYALSSGYYDAYYIKAQKVRTLIQQDFNEAFRSVDLLLTPVAPTPAFRIGEKTADPLQMYLSDIFTIPVNLAGICGISVPAGISSNGLPIGLQLLGRPFGEETILRAAFDFEQATQWHTKKAAL.

Residues Lys78 and Ser153 each act as charge relay system in the active site. Ser177 (acyl-ester intermediate) is an active-site residue.

The protein belongs to the amidase family. GatA subfamily. In terms of assembly, heterotrimer of A, B and C subunits.

The catalysed reaction is L-glutamyl-tRNA(Gln) + L-glutamine + ATP + H2O = L-glutaminyl-tRNA(Gln) + L-glutamate + ADP + phosphate + H(+). Its function is as follows. Allows the formation of correctly charged Gln-tRNA(Gln) through the transamidation of misacylated Glu-tRNA(Gln) in organisms which lack glutaminyl-tRNA synthetase. The reaction takes place in the presence of glutamine and ATP through an activated gamma-phospho-Glu-tRNA(Gln). This Trichlorobacter lovleyi (strain ATCC BAA-1151 / DSM 17278 / SZ) (Geobacter lovleyi) protein is Glutamyl-tRNA(Gln) amidotransferase subunit A.